The primary structure comprises 88 residues: Small ribosomal subunit protein bS20 (88 aa).

Belongs to the bacterial ribosomal protein bS20 family.

In terms of biological role, binds directly to 16S ribosomal RNA. The sequence is that of Small ribosomal subunit protein bS20 from Oenococcus oeni (strain ATCC BAA-331 / PSU-1).